Here is a 250-residue protein sequence, read N- to C-terminus: 3-deoxy-manno-octulosonate cytidylyltransferase (250 aa).

This sequence belongs to the KdsB family.

Its subcellular location is the cytoplasm. It carries out the reaction 3-deoxy-alpha-D-manno-oct-2-ulosonate + CTP = CMP-3-deoxy-beta-D-manno-octulosonate + diphosphate. The protein operates within nucleotide-sugar biosynthesis; CMP-3-deoxy-D-manno-octulosonate biosynthesis; CMP-3-deoxy-D-manno-octulosonate from 3-deoxy-D-manno-octulosonate and CTP: step 1/1. Its pathway is bacterial outer membrane biogenesis; lipopolysaccharide biosynthesis. Functionally, activates KDO (a required 8-carbon sugar) for incorporation into bacterial lipopolysaccharide in Gram-negative bacteria. The chain is 3-deoxy-manno-octulosonate cytidylyltransferase from Bacteroides thetaiotaomicron (strain ATCC 29148 / DSM 2079 / JCM 5827 / CCUG 10774 / NCTC 10582 / VPI-5482 / E50).